The chain runs to 340 residues: Deubiquitinase SseL (340 aa).

His-223 is a catalytic residue. Cys-285 (nucleophile) is an active-site residue.

Belongs to the peptidase C79 family.

Its subcellular location is the secreted. It localises to the host cytoplasm. Effector proteins function to alter host cell physiology and promote bacterial survival in host tissues. This protease targets the host cell ubiquitin pathway by acting as a deubiquitinase in infected host cells. The protein is Deubiquitinase SseL (sseL) of Salmonella choleraesuis (strain SC-B67).